A 215-amino-acid chain; its full sequence is Pyrrolidone-carboxylate peptidase (215 aa).

Catalysis depends on residues E80, C143, and H167.

It belongs to the peptidase C15 family. In terms of assembly, homotetramer.

It localises to the cytoplasm. It catalyses the reaction Release of an N-terminal pyroglutamyl group from a polypeptide, the second amino acid generally not being Pro.. In terms of biological role, removes 5-oxoproline from various penultimate amino acid residues except L-proline. This chain is Pyrrolidone-carboxylate peptidase, found in Bacillus cereus (strain G9842).